Reading from the N-terminus, the 530-residue chain is Inactive ubiquitin carboxyl-terminal hydrolase 17-like protein 7 (530 aa).

The USP domain maps to 80-375; the sequence is AGLQKIGNTF…QAYVLFYIQK (296 aa). A compositionally biased stretch (basic and acidic residues) spans 382–392; it reads SESVSRGREPR. 3 disordered regions span residues 382 to 412, 431 to 454, and 490 to 530; these read SESV…KRDH, ESTL…NVRK, and SSTK…LVCQ. Residues 490-512 are compositionally biased toward polar residues; sequence SSTKPTDQESMNTGTLASLQGST. The span at 513–524 shows a compositional bias: basic residues; sequence RRSKGNNKHSKR.

The protein belongs to the peptidase C19 family. USP17 subfamily.

It is found in the nucleus. Its subcellular location is the endoplasmic reticulum. This is Inactive ubiquitin carboxyl-terminal hydrolase 17-like protein 7 (USP17L7) from Homo sapiens (Human).